The following is a 246-amino-acid chain: NAD-dependent protein deacylase (246 aa).

One can recognise a Deacetylase sirtuin-type domain in the interval 1–237 (MSLPYRHVVI…PRLVEEILAA (237 aa)). An NAD(+)-binding site is contributed by 13-32 (GAGISAESGIQTFRAQDGLW). Residues Tyr-57 and Arg-60 each contribute to the substrate site. 94-97 (QNID) is a binding site for NAD(+). Residue His-112 is the Proton acceptor of the active site. Cys-120 and Cys-139 together coordinate Zn(2+). NAD(+) is bound by residues 179 to 181 (GTS), 205 to 207 (NLE), and Ala-223.

It belongs to the sirtuin family. Class III subfamily. The cofactor is Zn(2+).

The protein localises to the cytoplasm. The catalysed reaction is N(6)-acetyl-L-lysyl-[protein] + NAD(+) + H2O = 2''-O-acetyl-ADP-D-ribose + nicotinamide + L-lysyl-[protein]. The enzyme catalyses N(6)-succinyl-L-lysyl-[protein] + NAD(+) + H2O = 2''-O-succinyl-ADP-D-ribose + nicotinamide + L-lysyl-[protein]. Its function is as follows. NAD-dependent lysine deacetylase and desuccinylase that specifically removes acetyl and succinyl groups on target proteins. Modulates the activities of several proteins which are inactive in their acylated form. The protein is NAD-dependent protein deacylase of Vibrio cholerae serotype O1 (strain ATCC 39315 / El Tor Inaba N16961).